The chain runs to 167 residues: Probable D-lyxose ketol-isomerase (167 aa).

His69, His71, Glu82, and His137 together coordinate Mn(2+).

Belongs to the D-lyxose ketol-isomerase family. Homodimer. The cofactor is Mn(2+).

It carries out the reaction D-lyxose = D-xylulose. Sugar isomerase that catalyzes the reversible isomerization of D-lyxose to D-xylulose. This is Probable D-lyxose ketol-isomerase (ydaE) from Bacillus subtilis (strain 168).